The following is a 533-amino-acid chain: Probable ribonuclease ZC3H12D (533 aa).

Residues 92 to 246 form the RNase NYN domain; sequence LRPIVIDGSN…PLGRRGPTLS (155 aa). Residues 251-282 form a C3H1-type zinc finger; that stretch reads KKPRPPEPSWQHCPYGKKCTYGVKCRFYHPER. The necessary for interaction with ZC3H12A stretch occupies residues 262 to 368; sequence HCPYGKKCTY…ASGVVSQSRG (107 aa). A disordered region spans residues 302-335; sequence LGGGAEEPRTPSARSRPTTARLLPQEPGEHDLPP.

It belongs to the ZC3H12 family. In terms of assembly, interacts with ZC3H12A. It depends on Mg(2+) as a cofactor. As to expression, expressed at low levels in bone marrow derived macrophages.

It is found in the cytoplasm. Its subcellular location is the P-body. Its function is as follows. May regulate cell growth likely by suppressing RB1 phosphorylation. May function as RNase and regulate the levels of target RNA species (Potential). In association with ZC3H12A enhances the degradation of interleukin IL-6 mRNA level in activated macrophages. Serve as a tumor suppressor in certain leukemia cells. Overexpression inhibits the G1 to S phase progression through suppression of RB1 phosphorylation. The protein is Probable ribonuclease ZC3H12D of Mus musculus (Mouse).